The sequence spans 98 residues: Gene 4 protein (98 aa).

Residues 38-73 form the HNH domain; it reads GCVRAATDVDHIKRGNDHSRSNLQAACHVCHGKKSA. The disordered stretch occupies residues 75–98; it reads EGVARRRELRARRKRPPERHPGRR. The span at 81–98 shows a compositional bias: basic residues; the sequence is RELRARRKRPPERHPGRR.

This chain is Gene 4 protein (4), found in Mycobacterium (Mycobacteriophage L5).